Here is a 95-residue protein sequence, read N- to C-terminus: Aspartyl/glutamyl-tRNA(Asn/Gln) amidotransferase subunit C (95 aa).

This sequence belongs to the GatC family. As to quaternary structure, heterotrimer of A, B and C subunits.

The enzyme catalyses L-glutamyl-tRNA(Gln) + L-glutamine + ATP + H2O = L-glutaminyl-tRNA(Gln) + L-glutamate + ADP + phosphate + H(+). It carries out the reaction L-aspartyl-tRNA(Asn) + L-glutamine + ATP + H2O = L-asparaginyl-tRNA(Asn) + L-glutamate + ADP + phosphate + 2 H(+). Its function is as follows. Allows the formation of correctly charged Asn-tRNA(Asn) or Gln-tRNA(Gln) through the transamidation of misacylated Asp-tRNA(Asn) or Glu-tRNA(Gln) in organisms which lack either or both of asparaginyl-tRNA or glutaminyl-tRNA synthetases. The reaction takes place in the presence of glutamine and ATP through an activated phospho-Asp-tRNA(Asn) or phospho-Glu-tRNA(Gln). The chain is Aspartyl/glutamyl-tRNA(Asn/Gln) amidotransferase subunit C from Geobacter metallireducens (strain ATCC 53774 / DSM 7210 / GS-15).